Reading from the N-terminus, the 318-residue chain is NADH-ubiquinone oxidoreductase chain 1 (318 aa).

The next 8 membrane-spanning stretches (helical) occupy residues 3–23 (LITL…LTLV), 70–90 (MFII…TPLP), 100–120 (LGIL…LWSG), 146–166 (LAII…TTLI), 171–191 (YIWL…STLA), 222–242 (LFFL…TILF), 254–273 (LYTT…FLWI), and 294–314 (LPLT…LASI).

This sequence belongs to the complex I subunit 1 family.

It is found in the mitochondrion inner membrane. It carries out the reaction a ubiquinone + NADH + 5 H(+)(in) = a ubiquinol + NAD(+) + 4 H(+)(out). Core subunit of the mitochondrial membrane respiratory chain NADH dehydrogenase (Complex I) that is believed to belong to the minimal assembly required for catalysis. Complex I functions in the transfer of electrons from NADH to the respiratory chain. The immediate electron acceptor for the enzyme is believed to be ubiquinone. The sequence is that of NADH-ubiquinone oxidoreductase chain 1 (MT-ND1) from Phyllostomus elongatus (Lesser spear-nosed bat).